Reading from the N-terminus, the 132-residue chain is Neurophysin 2 (132 aa).

Intrachain disulfides connect Cys-10–Cys-54, Cys-13–Cys-27, Cys-21–Cys-44, Cys-28–Cys-34, Cys-61–Cys-73, Cys-67–Cys-85, and Cys-74–Cys-79.

This sequence belongs to the vasopressin/oxytocin family.

It is found in the secreted. Functionally, neurophysin 2 specifically binds vasopressin. The polypeptide is Neurophysin 2 (Struthio camelus (Common ostrich)).